Reading from the N-terminus, the 155-residue chain is MKGSDALIMALRNMAATLGVYDLMEVRVFLERSCRFVQERYRAIYVDAYMSMVVDSVLDLKAGFSGTPEMDDARYSLRDALKRLDEINAPTIVGLTVLYRTYVKGEPLHPPGTPFPGGFEVEKKDGVHYCPVKDKQSDNPEALCDICIARQSPLP.

The protein belongs to the UPF0305 family.

The sequence is that of UPF0305 protein MTH_811 from Methanothermobacter thermautotrophicus (strain ATCC 29096 / DSM 1053 / JCM 10044 / NBRC 100330 / Delta H) (Methanobacterium thermoautotrophicum).